Consider the following 277-residue polypeptide: MAINLKLEQIPVVYILSDSIGETGEVVAKAAASQFDSGRVDIRRVPYLSSVREVEEALQEAESAGALVVYTLVRPDLKEYLEKRAHELSLPHVDIMGPMLEGLKQITKQNPKYQPGLIRKMDEAYFSKVEAIEFAVKYDDGKEPRGLLRADLVVIGVSRTSKTPLCMYLAHKGIKAANVPLVPEATPPEELFKIPPHKVVGLTIKPSILFEIRKERLKTLGLSQTADYANMERILMELDYALGIMKKIGCAVIDVSNKAVEETAARVLEIYRKGVGR.

156-163 (GVSRTSKT) is an ADP binding site.

The protein belongs to the pyruvate, phosphate/water dikinase regulatory protein family. PDRP subfamily.

The catalysed reaction is N(tele)-phospho-L-histidyl/L-threonyl-[pyruvate, phosphate dikinase] + ADP = N(tele)-phospho-L-histidyl/O-phospho-L-threonyl-[pyruvate, phosphate dikinase] + AMP + H(+). The enzyme catalyses N(tele)-phospho-L-histidyl/O-phospho-L-threonyl-[pyruvate, phosphate dikinase] + phosphate + H(+) = N(tele)-phospho-L-histidyl/L-threonyl-[pyruvate, phosphate dikinase] + diphosphate. Bifunctional serine/threonine kinase and phosphorylase involved in the regulation of the pyruvate, phosphate dikinase (PPDK) by catalyzing its phosphorylation/dephosphorylation. This is Putative pyruvate, phosphate dikinase regulatory protein from Carboxydothermus hydrogenoformans (strain ATCC BAA-161 / DSM 6008 / Z-2901).